A 332-amino-acid polypeptide reads, in one-letter code: Endonuclease 8-like 2 (332 aa).

The active-site Schiff-base intermediate with DNA is Pro2. Glu3 (proton donor) is an active-site residue. The Proton donor; for beta-elimination activity role is filled by Lys50. Residue Lys50 is modified to N6-acetyllysine. Residues 56–121 form a disordered region; it reads FDPDEEMGPP…EDDSEYLERD (66 aa). Ser68 is subject to Phosphoserine. The span at 74–84 shows a compositional bias: basic and acidic residues; that stretch reads PQKEAQKEGAA. The span at 94–105 shows a compositional bias: polar residues; sequence GQKTPDGSSQSA. Lys154 is subject to N6-acetyllysine. Asn231 is a binding site for DNA. Residues 284–320 form an FPG-type zinc finger; the sequence is QVYQREQCPAGHQVMKEAFGPQDGLQRLTWWCPQCQP. The active-site Proton donor; for delta-elimination activity is the Arg310.

This sequence belongs to the FPG family. Binds EP300.

The protein resides in the nucleus. It catalyses the reaction 2'-deoxyribonucleotide-(2'-deoxyribose 5'-phosphate)-2'-deoxyribonucleotide-DNA = a 3'-end 2'-deoxyribonucleotide-(2,3-dehydro-2,3-deoxyribose 5'-phosphate)-DNA + a 5'-end 5'-phospho-2'-deoxyribonucleoside-DNA + H(+). With respect to regulation, acetylation of Lys-50 leads to loss of DNA nicking activity. Its function is as follows. Involved in base excision repair of DNA damaged by oxidation or by mutagenic agents. Has DNA glycosylase activity towards 5-hydroxyuracil and other oxidized derivatives of cytosine with a preference for mismatched double-stranded DNA (DNA bubbles). Has low or no DNA glycosylase activity towards thymine glycol, 2-hydroxyadenine, hypoxanthine and 8-oxoguanine. Has AP (apurinic/apyrimidinic) lyase activity and introduces nicks in the DNA strand. Cleaves the DNA backbone by beta-delta elimination to generate a single-strand break at the site of the removed base with both 3'- and 5'-phosphates. The chain is Endonuclease 8-like 2 (NEIL2) from Pongo abelii (Sumatran orangutan).